Here is a 421-residue protein sequence, read N- to C-terminus: Testin (421 aa).

Positions 92–199 constitute a PET domain; sequence MILTNPVAAK…GDVKLPCEMD (108 aa). Residues 133-164 are disordered; that stretch reads EKQPVAGSEGAQYRKKQLAKQLPAHDQDPSKC. Residues 155-164 are compositionally biased toward basic and acidic residues; sequence PAHDQDPSKC. LIM zinc-binding domains are found at residues 234 to 297, 299 to 359, and 362 to 421; these read YSCY…CDSE, PRCA…NHAV, and QGCH…KMMS.

This sequence belongs to the prickle / espinas / testin family. In terms of assembly, interacts via LIM domain 1 with ZYX. Interacts (via LIM domain 3) with ENAH and VASP. Interacts with ALKBH4, talin, actin, alpha-actinin, GRIP1 and PXN. Interacts (via LIM domain 2) with ACTL7A (via N-terminus). Heterodimer with ACTL7A; the heterodimer interacts with ENAH to form a heterotrimer.

The protein resides in the cytoplasm. The protein localises to the cell junction. It localises to the focal adhesion. Scaffold protein that may play a role in cell adhesion, cell spreading and in the reorganization of the actin cytoskeleton. Plays a role in the regulation of cell proliferation. May act as a tumor suppressor. This is Testin (TES) from Colobus guereza (Mantled guereza).